We begin with the raw amino-acid sequence, 506 residues long: Histidine ammonia-lyase (506 aa).

Positions 143-145 form a cross-link, 5-imidazolinone (Ala-Gly); that stretch reads ASG. Residue Ser-144 is modified to 2,3-didehydroalanine (Ser).

This sequence belongs to the PAL/histidase family. In terms of processing, contains an active site 4-methylidene-imidazol-5-one (MIO), which is formed autocatalytically by cyclization and dehydration of residues Ala-Ser-Gly.

It is found in the cytoplasm. It carries out the reaction L-histidine = trans-urocanate + NH4(+). Its pathway is amino-acid degradation; L-histidine degradation into L-glutamate; N-formimidoyl-L-glutamate from L-histidine: step 1/3. The protein is Histidine ammonia-lyase of Salmonella dublin (strain CT_02021853).